Reading from the N-terminus, the 260-residue chain is Serine/threonine-protein acetyltransferase NGR_a02610 (260 aa).

Active-site residues include His123 and Glu143. His123 provides a ligand contact to CoA. Lys180–Ser181 is a CoA binding site. The active site involves Cys185.

The protein belongs to the acetyltransferase YopJ family.

The catalysed reaction is L-threonyl-[protein] + acetyl-CoA = O-acetyl-L-threonyl-[protein] + CoA. The enzyme catalyses L-seryl-[protein] + acetyl-CoA = O-acetyl-L-seryl-[protein] + CoA. Serine/threonine-protein acetyltransferase translocated into infected cells, which mediates acetylation of serine and threonine residues of host target proteins. The protein is Serine/threonine-protein acetyltransferase NGR_a02610 of Sinorhizobium fredii (strain NBRC 101917 / NGR234).